The following is a 462-amino-acid chain: Glycine--tRNA ligase (462 aa).

2 residues coordinate substrate: R100 and E174. Residues 206–208 (RNE), 216–221 (FRTREF), 290–291 (EL), and 334–337 (GADR) contribute to the ATP site. 221-225 (FEQME) is a binding site for substrate. 330–334 (EPSLG) lines the substrate pocket.

Belongs to the class-II aminoacyl-tRNA synthetase family. As to quaternary structure, homodimer.

Its subcellular location is the cytoplasm. It carries out the reaction tRNA(Gly) + glycine + ATP = glycyl-tRNA(Gly) + AMP + diphosphate. Its function is as follows. Catalyzes the attachment of glycine to tRNA(Gly). This is Glycine--tRNA ligase from Acetivibrio thermocellus (strain ATCC 27405 / DSM 1237 / JCM 9322 / NBRC 103400 / NCIMB 10682 / NRRL B-4536 / VPI 7372) (Clostridium thermocellum).